Consider the following 60-residue polypeptide: Putative SERF-like protein (60 aa).

Residues 1 to 53 show a composition bias toward basic and acidic residues; sequence MTRGNQRDLARQKNQKKQADLTKGKRTDNLTVEQRKARDAELMREKQKKKEEA. The interval 1-60 is disordered; that stretch reads MTRGNQRDLARQKNQKKQADLTKGKRTDNLTVEQRKARDAELMREKQKKKEEAAAAGTSK.

Belongs to the SERF family.

The sequence is that of Putative SERF-like protein from Drosophila melanogaster (Fruit fly).